The primary structure comprises 153 residues: Ubiquitin-conjugating enzyme E2 35 (153 aa).

Positions 5–151 (NLPRRIIKET…AKEWTRLYAS (147 aa)) constitute a UBC core domain. The active-site Glycyl thioester intermediate is the Cys89.

It belongs to the ubiquitin-conjugating enzyme family. As to quaternary structure, interacts with yeast and human Mms2, with the RING domain of RGLG2 and with UEV1A, UEV1B, UEV1C and UEV1D. As to expression, ubiquitously expressed at low level. Mainly expressed in the vasculature.

The catalysed reaction is S-ubiquitinyl-[E1 ubiquitin-activating enzyme]-L-cysteine + [E2 ubiquitin-conjugating enzyme]-L-cysteine = [E1 ubiquitin-activating enzyme]-L-cysteine + S-ubiquitinyl-[E2 ubiquitin-conjugating enzyme]-L-cysteine.. It functions in the pathway protein modification; protein ubiquitination. Catalyzes the synthesis of non-canonical poly-ubiquitin chains that are linked through 'Lys-63'. This type of poly-ubiquitination does not lead to protein degradation by the proteasome. Mediates transcriptional activation of target genes. Required for postreplication repair of UV-damaged DNA and for adapting root developmental programs to suboptimal availability of iron. The chain is Ubiquitin-conjugating enzyme E2 35 (UBC35) from Arabidopsis thaliana (Mouse-ear cress).